The following is a 287-amino-acid chain: MATLIDNRYGKARVRVLRVFKGPNEYHKVFDFDCRVLLRGAEFSETYLTGDNSKVVATDTMKNTVYVIAQKEEFKSLEEYGILLGKHFLATYSWVNGVEVVMRENQWRRIKTSNGKEQAHSFQRDREIHSVTVTSSRDKSPVVVSGIDDLLIMKTTQSGFEGFHRDKYTSLKETKDRVFATVVTANWTYNTLSVDYSKVFEQFKLSVFDIFAQTYSRSVQETLFLIAKDVISKVPQVEQVHLSLPNKHAFGFDFSRLNIENNQTVFQPVEEPSGLIEGTIKRSHSRL.

Catalysis depends on charge relay system residues lysine 11 and threonine 58. 7 residues coordinate urate: threonine 58, aspartate 59, phenylalanine 160, arginine 177, valine 219, glutamine 220, and asparagine 246. Residue histidine 248 is the Charge relay system of the active site. Positions 285 to 287 (SRL) match the Microbody targeting signal motif.

This sequence belongs to the uricase family.

The protein resides in the peroxisome. The catalysed reaction is urate + O2 + H2O = 5-hydroxyisourate + H2O2. It functions in the pathway purine metabolism; urate degradation; (S)-allantoin from urate: step 1/3. Catalyzes the oxidation of uric acid to 5-hydroxyisourate, which is further processed to form (S)-allantoin. In Dictyostelium discoideum (Social amoeba), this protein is Uricase (uox).